We begin with the raw amino-acid sequence, 250 residues long: tRNA (guanine-N(1)-)-methyltransferase (250 aa).

S-adenosyl-L-methionine contacts are provided by residues Gly116 and 136–141; that span reads IGDYVL.

The protein belongs to the RNA methyltransferase TrmD family. As to quaternary structure, homodimer.

Its subcellular location is the cytoplasm. It carries out the reaction guanosine(37) in tRNA + S-adenosyl-L-methionine = N(1)-methylguanosine(37) in tRNA + S-adenosyl-L-homocysteine + H(+). Functionally, specifically methylates guanosine-37 in various tRNAs. This chain is tRNA (guanine-N(1)-)-methyltransferase, found in Pseudomonas putida (strain W619).